Here is a 67-residue protein sequence, read N- to C-terminus: DNA-directed RNA polymerase subunit omega (67 aa).

This sequence belongs to the RNA polymerase subunit omega family. The RNAP catalytic core consists of 2 alpha, 1 beta, 1 beta' and 1 omega subunit. When a sigma factor is associated with the core the holoenzyme is formed, which can initiate transcription.

It catalyses the reaction RNA(n) + a ribonucleoside 5'-triphosphate = RNA(n+1) + diphosphate. In terms of biological role, promotes RNA polymerase assembly. Latches the N- and C-terminal regions of the beta' subunit thereby facilitating its interaction with the beta and alpha subunits. The chain is DNA-directed RNA polymerase subunit omega from Methylibium petroleiphilum (strain ATCC BAA-1232 / LMG 22953 / PM1).